Consider the following 204-residue polypeptide: Nicotine blue oxidoreductase (204 aa).

In terms of assembly, homotetramer. The cofactor is FMN.

The enzyme catalyses 3,3'-bipyridine-2,2',5,5',6,6'-hexol + NADP(+) = (E)-2,2',5,5'-tetrahydroxy-6H,6'H-(3,3'-bipyridinylidene)-6,6'-dione + NADPH + 3 H(+). The catalysed reaction is 3,3'-bipyridine-2,2',5,5',6,6'-hexol + NAD(+) = (E)-2,2',5,5'-tetrahydroxy-6H,6'H-(3,3'-bipyridinylidene)-6,6'-dione + NADH + 3 H(+). The protein operates within alkaloid degradation; nicotine degradation. In terms of biological role, catalyzes the reduction of nicotine blue to its hydroquinone form. Nicotine blue is the name given to the compound formed by the autocatalytic condensation of two molecules of 2,3,6-trihydroxypyridine, an intermediate in the nicotine degradation pathway. May play a role in preventing the intracellular formation of nicotine blue semiquinone radicals, which by redox cycling would lead to the formation of toxic reactive oxygen species. Besides nicotine blue, several other quinones are reduced by nboR. In Paenarthrobacter nicotinovorans (Arthrobacter nicotinovorans), this protein is Nicotine blue oxidoreductase (nboR).